The chain runs to 607 residues: T-box transcription factor TBX18 (607 aa).

The Engrailed homology 1 repressor signature appears at 18–28 (HAFSVEALIGA). A disordered region spans residues 30-141 (KQQQLQKKRR…PLPSPQAPRV (112 aa)). Residues 36–40 (KKRRK) carry the Nuclear localization signal motif. Residues 44 to 53 (EEAAGAVDDG) show a composition bias toward low complexity. Residues 143–330 (LQGAELWKRF…RNPFAKGFRD (188 aa)) constitute a DNA-binding region (T-box).

Homodimer. Can form a heterodimer with TBX15. Interacts with GATA4 and NKX2-5. Interacts with PAX3. Interacts (via engrailed homology 1 repressor motif) with TLE3; this interaction represses TBX18 transcriptional activity. Interacts with SIX1.

The protein resides in the nucleus. In terms of biological role, acts as a transcriptional repressor involved in developmental processes of a variety of tissues and organs, including the heart and coronary vessels, the ureter and the vertebral column. Required for embryonic development of the sino atrial node (SAN) head area. The chain is T-box transcription factor TBX18 (TBX18) from Homo sapiens (Human).